Here is an 820-residue protein sequence, read N- to C-terminus: Trimethylamine-N-oxide reductase (820 aa).

Positions 1-33 (MAITRRSFLKGVATTSAASVIGPSLLASASANA) form a signal peptide, tat-type signal. Serine 179 is a Mo-bis(molybdopterin guanine dinucleotide) binding site.

Belongs to the prokaryotic molybdopterin-containing oxidoreductase family. Mo-bis(molybdopterin guanine dinucleotide) is required as a cofactor. Predicted to be exported by the Tat system. The position of the signal peptide cleavage has not been experimentally proven.

It localises to the periplasm. It carries out the reaction trimethylamine + 2 Fe(III)-[cytochrome c] + H2O = trimethylamine N-oxide + 2 Fe(II)-[cytochrome c] + 3 H(+). Functionally, reduces trimethylamine-N-oxide (TMAO) into trimethylamine; an anaerobic reaction coupled to energy-yielding reactions. This Vibrio vulnificus (strain YJ016) protein is Trimethylamine-N-oxide reductase (torA).